The primary structure comprises 445 residues: CBL-interacting serine/threonine-protein kinase 5 (445 aa).

The 256-residue stretch at 12–267 (YEMGRLLGKG…IPAIMRTPWL (256 aa)) folds into the Protein kinase domain. ATP contacts are provided by residues 18 to 26 (LGKGTFAKV) and lysine 41. The active-site Proton acceptor is the aspartate 135. The interval 153-182 (DFGLSALPEQILQDGLLHTQCGTPAYVAPE) is activation loop. Position 157 is a phosphoserine (serine 157). A Phosphothreonine modification is found at threonine 171. Residues 307-332 (ISPKFFNAFEFISSMSSGFDLSSLFE) enclose the NAF domain. The PPI stretch occupies residues 336-366 (KVQSVFTSRSSATEVMEKIETVTKEMNMKVK).

It belongs to the protein kinase superfamily. CAMK Ser/Thr protein kinase family. SNF1 subfamily. The cofactor is Mn(2+).

The enzyme catalyses L-seryl-[protein] + ATP = O-phospho-L-seryl-[protein] + ADP + H(+). It carries out the reaction L-threonyl-[protein] + ATP = O-phospho-L-threonyl-[protein] + ADP + H(+). CIPK serine-threonine protein kinases interact with CBL proteins. Binding of a CBL protein to the regulatory NAF domain of CIPK protein lead to the activation of the kinase in a calcium-dependent manner. This is CBL-interacting serine/threonine-protein kinase 5 (CIPK5) from Arabidopsis thaliana (Mouse-ear cress).